The primary structure comprises 184 residues: Non-specific lipid transfer protein GPI-anchored 6 (184 aa).

Residues 1 to 24 form the signal peptide; the sequence is MEKSTRTLFITIVITSMLLGFGNS. Intrachain disulfides connect C33-C74, C43-C58, C59-C101, and C72-C111. The interval 138 to 158 is disordered; the sequence is NSTSPTQIHKDGTGGGKAEPV. S160 is lipidated: GPI-anchor amidated serine. The propeptide at 161–184 is removed in mature form; sequence NGWKEKSWLGVELLIYLLVSLIFF.

This sequence belongs to the plant LTP family. As to expression, preferentially expressed in the shoot apical meristem and the root meristem. Also present in the ovules and developing embryos. Observed in cotyledons, hypocotyls, flowers, leaves and siliques. Up-regulated in the epidermis of stems.

It localises to the cell membrane. Lipid transfer protein involved in seed and ovule maturation and development, probably by regulating the fatty acids homeostasis during suberin and sporopollenin biosynthesis or deposition. Contributes to pre-invasive defense against some non-host powdery mildew pathogens by preventing the penetration of the epidermal cell wall by the fungal agents (e.g. Blumeria graminis f. sp. hordei (Bgh)). The sequence is that of Non-specific lipid transfer protein GPI-anchored 6 from Arabidopsis thaliana (Mouse-ear cress).